We begin with the raw amino-acid sequence, 541 residues long: Eukaryotic translation initiation factor 3 subunit E (541 aa).

One can recognise a PCI domain in the interval valine 252–proline 443. Positions alanine 466–asparagine 541 are disordered. The span at asparagine 490–asparagine 502 shows a compositional bias: gly residues. Residues glutamine 506–glutamate 522 are compositionally biased toward basic and acidic residues. Residues serine 523 to asparagine 541 show a composition bias toward low complexity.

This sequence belongs to the eIF-3 subunit E family. As to quaternary structure, component of the eukaryotic translation initiation factor 3 (eIF-3) complex.

The protein resides in the cytoplasm. In terms of biological role, component of the eukaryotic translation initiation factor 3 (eIF-3) complex, which is involved in protein synthesis of a specialized repertoire of mRNAs and, together with other initiation factors, stimulates binding of mRNA and methionyl-tRNAi to the 40S ribosome. The eIF-3 complex specifically targets and initiates translation of a subset of mRNAs involved in cell proliferation. The polypeptide is Eukaryotic translation initiation factor 3 subunit E (Mycosarcoma maydis (Corn smut fungus)).